Consider the following 358-residue polypeptide: RNA demethylase ALKBH5 (358 aa).

The segment at 1–50 (MSATYTDLREKLQSLYRDSPKEVRKRKQPTSDTEEEEAASEPEEEEEARK) is disordered. The span at 7–22 (DLREKLQSLYRDSPKE) shows a compositional bias: basic and acidic residues. Residues 32 to 46 (DTEEEEAASEPEEEE) show a composition bias toward acidic residues. Tyr-105 is an active-site residue. 2-oxoglutarate is bound by residues Asn-159, Tyr-161, His-170, His-232, and Arg-243. A disulfide bridge links Cys-196 with Cys-233. 2 disordered regions span residues 259-312 (EMKS…RRSV) and 334-358 (DYVDTYTETGEDDGSPVRKVKMRRH). Residues 262 to 278 (SLSSSYQPERLQGSNRQ) are compositionally biased toward polar residues. Basic residues predominate over residues 279-288 (HILKPKRSHR). Positions 289–310 (KADPDAAHRPRILEMDKEENRR) are enriched in basic and acidic residues.

This sequence belongs to the alkB family. In terms of assembly, monomer. Fe(2+) serves as cofactor.

It localises to the nucleus speckle. The enzyme catalyses an N(6)-methyladenosine in mRNA + 2-oxoglutarate + O2 = an adenosine in mRNA + formaldehyde + succinate + CO2. Its function is as follows. Dioxygenase that specifically demethylates N(6)-methyladenosine (m6A) RNA, the most prevalent internal modification of messenger RNA (mRNA) in higher eukaryotes. Demethylates RNA by oxidative demethylation, which requires molecular oxygen, alpha-ketoglutarate and iron. Demethylation of m6A mRNA affects mRNA processing, translation and export. In Xenopus tropicalis (Western clawed frog), this protein is RNA demethylase ALKBH5 (alkbh5).